The primary structure comprises 101 residues: Ubiquitin-related modifier 1 (101 aa).

At glycine 101 the chain carries 1-thioglycine. A Glycyl lysine isopeptide (Gly-Lys) (interchain with K-? in acceptor proteins) cross-link involves residue glycine 101.

The protein belongs to the URM1 family. Post-translationally, C-terminal thiocarboxylation occurs in 2 steps, it is first acyl-adenylated (-COAMP) via the hesA/moeB/thiF part of UBA4, then thiocarboxylated (-COSH) via the rhodanese domain of UBA4.

It localises to the cytoplasm. Its pathway is tRNA modification; 5-methoxycarbonylmethyl-2-thiouridine-tRNA biosynthesis. Its function is as follows. Acts as a sulfur carrier required for 2-thiolation of mcm(5)S(2)U at tRNA wobble positions of cytosolic tRNA(Lys), tRNA(Glu) and tRNA(Gln). Serves as sulfur donor in tRNA 2-thiolation reaction by being thiocarboxylated (-COSH) at its C-terminus by the MOCS3 homolog UBA4. The sulfur is then transferred to tRNA to form 2-thiolation of mcm(5)S(2)U. Prior mcm(5) tRNA modification by the elongator complex is required for 2-thiolation. Also acts as a ubiquitin-like protein (UBL) that is covalently conjugated via an isopeptide bond to lysine residues of target proteins such as AHP1. The thiocarboxylated form serves as substrate for conjugation and oxidative stress specifically induces the formation of UBL-protein conjugates. This Debaryomyces hansenii (strain ATCC 36239 / CBS 767 / BCRC 21394 / JCM 1990 / NBRC 0083 / IGC 2968) (Yeast) protein is Ubiquitin-related modifier 1.